Here is a 472-residue protein sequence, read N- to C-terminus: 3-isopropylmalate dehydratase large subunit (472 aa).

Positions 347, 407, and 410 each coordinate [4Fe-4S] cluster.

This sequence belongs to the aconitase/IPM isomerase family. LeuC type 1 subfamily. In terms of assembly, heterodimer of LeuC and LeuD. It depends on [4Fe-4S] cluster as a cofactor.

It carries out the reaction (2R,3S)-3-isopropylmalate = (2S)-2-isopropylmalate. It functions in the pathway amino-acid biosynthesis; L-leucine biosynthesis; L-leucine from 3-methyl-2-oxobutanoate: step 2/4. In terms of biological role, catalyzes the isomerization between 2-isopropylmalate and 3-isopropylmalate, via the formation of 2-isopropylmaleate. The sequence is that of 3-isopropylmalate dehydratase large subunit from Synechococcus sp. (strain WH7803).